Here is a 350-residue protein sequence, read N- to C-terminus: DNA-directed RNA polymerase subunit alpha (350 aa).

The alpha N-terminal domain (alpha-NTD) stretch occupies residues 1–226; it reads MLISQRPTLS…ELFGLARELN (226 aa). Positions 241–350 are alpha C-terminal domain (alpha-CTD); it reads ADQAAHFALP…NQDYAETEQL (110 aa). Positions 328–350 are disordered; the sequence is GTWNSDAGYDLEDNQDYAETEQL. Over residues 336–350 the composition is skewed to acidic residues; that stretch reads YDLEDNQDYAETEQL.

It belongs to the RNA polymerase alpha chain family. Homodimer. The RNAP catalytic core consists of 2 alpha, 1 beta, 1 beta' and 1 omega subunit. When a sigma factor is associated with the core the holoenzyme is formed, which can initiate transcription.

The catalysed reaction is RNA(n) + a ribonucleoside 5'-triphosphate = RNA(n+1) + diphosphate. In terms of biological role, DNA-dependent RNA polymerase catalyzes the transcription of DNA into RNA using the four ribonucleoside triphosphates as substrates. The chain is DNA-directed RNA polymerase subunit alpha from Mycolicibacterium vanbaalenii (strain DSM 7251 / JCM 13017 / BCRC 16820 / KCTC 9966 / NRRL B-24157 / PYR-1) (Mycobacterium vanbaalenii).